Here is a 155-residue protein sequence, read N- to C-terminus: Protein-export protein SecB (155 aa).

Belongs to the SecB family. Homotetramer, a dimer of dimers. One homotetramer interacts with 1 SecA dimer.

It is found in the cytoplasm. Functionally, one of the proteins required for the normal export of preproteins out of the cell cytoplasm. It is a molecular chaperone that binds to a subset of precursor proteins, maintaining them in a translocation-competent state. It also specifically binds to its receptor SecA. This chain is Protein-export protein SecB, found in Escherichia fergusonii (strain ATCC 35469 / DSM 13698 / CCUG 18766 / IAM 14443 / JCM 21226 / LMG 7866 / NBRC 102419 / NCTC 12128 / CDC 0568-73).